The sequence spans 548 residues: Serine/threonine-protein phosphatase 2A 56 kDa regulatory subunit delta 1 isoform (548 aa).

Positions 1 to 10 (MKGIKSKMLS) are enriched in basic residues. Positions 1–75 (MKGIKSKMLS…KKVPIDTTPT (75 aa)) are disordered. Positions 27 to 39 (KKSNSHDSSKAPK) are enriched in basic and acidic residues. Tyr-96 bears the Phosphotyrosine mark. Ser-99, Ser-109, and Ser-542 each carry phosphoserine.

Belongs to the phosphatase 2A regulatory subunit B family. As to quaternary structure, PP2A consists of a common heterodimeric core enzyme, composed of a 36 kDa catalytic subunit (subunit C) and a 65 kDa constant regulatory subunit (PR65 or subunit A), that associates with a variety of regulatory subunits. Proteins that associate with the core dimer include three families of regulatory subunits B (the R2/B/PR55/B55, R3/B''/PR72/PR130/PR59 and R5/B'/B56 families), the 48 kDa variable regulatory subunit, viral proteins, and cell signaling molecules.

Its subcellular location is the cytoplasm. It localises to the nucleus. Functionally, the B regulatory subunit might modulate substrate selectivity and catalytic activity, and might also direct the localization of the catalytic enzyme to a particular subcellular compartment. Has a role in cell shape control and septum formation. The chain is Serine/threonine-protein phosphatase 2A 56 kDa regulatory subunit delta 1 isoform (par1) from Schizosaccharomyces pombe (strain 972 / ATCC 24843) (Fission yeast).